The chain runs to 527 residues: T-complex protein 1 subunit delta (527 aa).

Belongs to the TCP-1 chaperonin family. Heterooligomeric complex of about 850 to 900 kDa that forms two stacked rings, 12 to 16 nm in diameter.

The protein resides in the cytoplasm. Molecular chaperone; assists the folding of proteins upon ATP hydrolysis. Known to play a role, in vitro, in the folding of actin and tubulin. The sequence is that of T-complex protein 1 subunit delta (cct4) from Schizosaccharomyces pombe (strain 972 / ATCC 24843) (Fission yeast).